A 781-amino-acid polypeptide reads, in one-letter code: Lon protease (781 aa).

The Lon N-terminal domain maps to 16–214 (ANVLVTRGIV…KILSFTIDER (199 aa)). 365 to 372 (GPPGVGKT) contributes to the ATP binding site. The Lon proteolytic domain occupies 601–781 (EYMPGVVNGM…YDDVYNRLFK (181 aa)). Residues serine 688 and lysine 731 contribute to the active site.

It belongs to the peptidase S16 family. As to quaternary structure, homohexamer. Organized in a ring with a central cavity.

Its subcellular location is the cytoplasm. It carries out the reaction Hydrolysis of proteins in presence of ATP.. ATP-dependent serine protease that mediates the selective degradation of mutant and abnormal proteins as well as certain short-lived regulatory proteins. Required for cellular homeostasis and for survival from DNA damage and developmental changes induced by stress. Degrades polypeptides processively to yield small peptide fragments that are 5 to 10 amino acids long. Binds to DNA in a double-stranded, site-specific manner. The polypeptide is Lon protease (Malacoplasma penetrans (strain HF-2) (Mycoplasma penetrans)).